Consider the following 541-residue polypeptide: Tyrosine-protein phosphatase non-receptor type 5 (541 aa).

Residues 1–55 (MCCSERLLGLPQPVEMEAPDEAEGLPSKQKEMPPPPPPSPPSEPAQKLPPQGAGS) are disordered. Over residues 32 to 43 (MPPPPPPSPPSE) the composition is skewed to pro residues. The next 2 helical transmembrane spans lie at 64–84 (LCLF…LSGH) and 122–142 (LLLV…WHLL). A Phosphoserine; by PKA modification is found at S221. Position 231 is a phosphothreonine; by MAPK (T231). Position 244 is a phosphoserine; by MAPK (S244). Residues 276 to 531 (LQAEFFEIPM…QFVHHAMSLY (256 aa)) form the Tyrosine-protein phosphatase domain. Residues D437, 472–478 (CSAGIGR), and Q516 each bind substrate. Catalysis depends on C472, which acts as the Phosphocysteine intermediate.

Belongs to the protein-tyrosine phosphatase family. Non-receptor class subfamily. Post-translationally, phosphorylation at Ser-221 by PKA deactivates PTPN5. Phosphorylation at Thr-231 and Ser-244 by MAPKs stabilizes the phosphatase, dephosphorylation of these sites results in ubiquitin-mediated degradation of the active phosphatase. As to expression, STEP20 is expressed only in the CNS.

The protein localises to the endoplasmic reticulum membrane. It is found in the cytoplasm. It carries out the reaction O-phospho-L-tyrosyl-[protein] + H2O = L-tyrosyl-[protein] + phosphate. In terms of biological role, may regulate the activity of several effector molecules involved in synaptic plasticity and neuronal cell survival, including MAPKs, Src family kinases and NMDA receptors. The chain is Tyrosine-protein phosphatase non-receptor type 5 (Ptpn5) from Mus musculus (Mouse).